A 450-amino-acid chain; its full sequence is Phosphoglucosamine mutase (450 aa).

S101 serves as the catalytic Phosphoserine intermediate. Mg(2+)-binding residues include S101, D240, D242, and D244. Residue S101 is modified to Phosphoserine.

The protein belongs to the phosphohexose mutase family. Requires Mg(2+) as cofactor. In terms of processing, activated by phosphorylation.

The enzyme catalyses alpha-D-glucosamine 1-phosphate = D-glucosamine 6-phosphate. Catalyzes the conversion of glucosamine-6-phosphate to glucosamine-1-phosphate. This chain is Phosphoglucosamine mutase, found in Streptococcus pneumoniae serotype 19F (strain G54).